We begin with the raw amino-acid sequence, 360 residues long: Probable protein phosphatase 2C 54 (360 aa).

The disordered stretch occupies residues 1–39; the sequence is MCVEESEGAERLDFGEPAAAAADAGKSKSKSPDELPSPR. In terms of domain architecture, PPM-type phosphatase spans 65-325; it reads RSGDWSDIGG…DNLTAVLVSF (261 aa). Residues Asp109, Gly110, Asp273, and Asp316 each contribute to the Mn(2+) site.

Belongs to the PP2C family. The cofactor is Mg(2+). Mn(2+) serves as cofactor.

It carries out the reaction O-phospho-L-seryl-[protein] + H2O = L-seryl-[protein] + phosphate. The enzyme catalyses O-phospho-L-threonyl-[protein] + H2O = L-threonyl-[protein] + phosphate. This is Probable protein phosphatase 2C 54 from Oryza sativa subsp. japonica (Rice).